The sequence spans 232 residues: Large ribosomal subunit protein uL1 (232 aa).

This sequence belongs to the universal ribosomal protein uL1 family. Part of the 50S ribosomal subunit.

Binds directly to 23S rRNA. The L1 stalk is quite mobile in the ribosome, and is involved in E site tRNA release. In terms of biological role, protein L1 is also a translational repressor protein, it controls the translation of the L11 operon by binding to its mRNA. This chain is Large ribosomal subunit protein uL1, found in Clostridium novyi (strain NT).